A 459-amino-acid polypeptide reads, in one-letter code: Probable acetate kinase (459 aa).

Asn9 lines the Mg(2+) pocket. Lys16 is an ATP binding site. Arg100 is a binding site for substrate. Asp156 (proton donor/acceptor) is an active-site residue. ATP is bound by residues 216 to 220 (HLGSG) and 299 to 301 (DFR). A disordered region spans residues 308-338 (TTTSSPTPSPNPNPNPNPDPNPDPNPDPQNQ). Over residues 314 to 334 (TPSPNPNPNPNPDPNPDPNPD) the composition is skewed to pro residues. Glu441 serves as a coordination point for Mg(2+).

Belongs to the acetokinase family. The cofactor is Mg(2+).

It catalyses the reaction acetate + ATP = acetyl phosphate + ADP. Its pathway is metabolic intermediate biosynthesis; acetyl-CoA biosynthesis; acetyl-CoA from acetate: step 1/2. The protein is Probable acetate kinase of Chaetomium globosum (strain ATCC 6205 / CBS 148.51 / DSM 1962 / NBRC 6347 / NRRL 1970) (Soil fungus).